A 199-amino-acid chain; its full sequence is Protein CPL1 (199 aa).

Residues 1 to 30 (MFSIPPSVRRLVFLFLIAAPLLSIVLPVAA) form the signal peptide. Residues 34-58 (GVDPPSKLQPRAPQPSRRMGATKRS) form a disordered region. Residue Asn-148 is glycosylated (N-linked (GlcNAc...) asparagine).

The protein resides in the secreted. Virulence factor which promotes fungal virulence by enhancing type 2 inflammation in the mouse host. Likely binds mouse Tlr4 independently of Ly96/Md2 and activates Tlr4 signaling to drive Stat3 phosphorylation in interstitial macrophages, which promotes the initial induction of Arg1/arginase-1 and increases macrophage sensitivity to Il4 signaling. This is Protein CPL1 from Cryptococcus neoformans var. grubii serotype A (strain H99 / ATCC 208821 / CBS 10515 / FGSC 9487) (Filobasidiella neoformans var. grubii).